A 512-amino-acid polypeptide reads, in one-letter code: Cytochrome P450 26B1 (512 aa).

Cys441 contacts heme.

Belongs to the cytochrome P450 family. It depends on heme as a cofactor.

It localises to the endoplasmic reticulum membrane. The protein resides in the microsome membrane. It carries out the reaction all-trans-retinoate + reduced [NADPH--hemoprotein reductase] + O2 = all-trans-4-hydroxyretinoate + oxidized [NADPH--hemoprotein reductase] + H2O + H(+). The catalysed reaction is all-trans-retinoate + reduced [NADPH--hemoprotein reductase] + O2 = all-trans-18-hydroxyretinoate + oxidized [NADPH--hemoprotein reductase] + H2O + H(+). Functionally, a cytochrome P450 monooxygenase involved in the metabolism of retinoates (RAs), the active metabolites of vitamin A, and critical signaling molecules in animals. RAs exist as at least four different isomers: all-trans-RA (atRA), 9-cis-RA, 13-cis-RA, and 9,13-dicis-RA, where atRA is considered to be the biologically active isomer, although 9-cis-RA and 13-cis-RA also have activity. Catalyzes the hydroxylation of atRA primarily at C-4 and C-18, thereby contributing to the regulation of atRA homeostasis and signaling. Hydroxylation of atRA limits its biological activity and initiates a degradative process leading to its eventual elimination. Involved in the convertion of atRA to all-trans-4-oxo-RA. Can oxidize all-trans-13,14-dihydroretinoate (DRA) to metabolites which could include all-trans-4-oxo-DRA, all-trans-4-hydroxy-DRA, all-trans-5,8-epoxy-DRA, and all-trans-18-hydroxy-DRA. Shows preference for the following substrates: atRA &gt; 9-cis-RA &gt; 13-cis-RA. Plays a central role in germ cell development: acts by degrading RAs in the developing testis, preventing STRA8 expression, thereby leading to delay of meiosis. Required for the maintenance of the undifferentiated state of male germ cells during embryonic development in Sertoli cells, inducing arrest in G0 phase of the cell cycle and preventing meiotic entry. Plays a role in skeletal development, both at the level of patterning and in the ossification of bone and the establishment of some synovial joints. Essential for postnatal survival. In terms of biological role, also has a significant activity in oxidation of tazarotenic acid and may therefore metabolize that xenobiotic in vivo. This is Cytochrome P450 26B1 (Cyp26b1) from Rattus norvegicus (Rat).